An 86-amino-acid polypeptide reads, in one-letter code: BolA-like protein 2 (86 aa).

Met1 carries the post-translational modification N-acetylmethionine.

Belongs to the BolA/IbaG family. As to quaternary structure, interacts with GLRX3; forms a heterotrimeric complex composed by two BOLA2 molecules and one GLRX3 molecule; linked by [2Fe-2S] clusters.

The protein resides in the cytoplasm. Its subcellular location is the nucleus. In terms of biological role, acts as a cytosolic iron-sulfur (Fe-S) cluster assembly factor that facilitates [2Fe-2S] cluster insertion into a subset of cytosolic proteins. Acts together with the monothiol glutaredoxin GLRX3. This Homo sapiens (Human) protein is BolA-like protein 2 (BOLA2).